The sequence spans 85 residues: MAKKNAPSAPADFEQALGELEALVERMEQGELSLEASLAEFERGIALARQCQQALQAAEQKVRLLSGEGEEVPLDTPDAEDGDGE.

The segment at 66–85 (SGEGEEVPLDTPDAEDGDGE) is disordered. The span at 68–85 (EGEEVPLDTPDAEDGDGE) shows a compositional bias: acidic residues.

The protein belongs to the XseB family. Heterooligomer composed of large and small subunits.

It is found in the cytoplasm. It carries out the reaction Exonucleolytic cleavage in either 5'- to 3'- or 3'- to 5'-direction to yield nucleoside 5'-phosphates.. Bidirectionally degrades single-stranded DNA into large acid-insoluble oligonucleotides, which are then degraded further into small acid-soluble oligonucleotides. The chain is Exodeoxyribonuclease 7 small subunit from Thioalkalivibrio sulfidiphilus (strain HL-EbGR7).